We begin with the raw amino-acid sequence, 410 residues long: Protein trichome birefringence-like 34 (410 aa).

A helical; Signal-anchor for type II membrane protein transmembrane segment spans residues 13–33; that stretch reads TSFHTIAAVLVAGLIFTAVFL. Residues 133–135 carry the GDS motif motif; that stretch reads GDS. Residues 383–397 carry the DCXHWCLPGXXDXWN motif motif; that stretch reads DCIHWCLPGVPDVWN.

It belongs to the PC-esterase family. TBL subfamily.

It is found in the golgi apparatus membrane. Functionally, may act as a bridging protein that binds pectin and other cell wall polysaccharides. Probably involved in maintaining esterification of pectins. May be involved in the specific O-acetylation of cell wall polymers. In Arabidopsis thaliana (Mouse-ear cress), this protein is Protein trichome birefringence-like 34 (TBL34).